Reading from the N-terminus, the 159-residue chain is Phosphopantetheine adenylyltransferase (159 aa).

Ser9 contacts substrate. ATP is bound by residues 9-10 (SF) and His17. Substrate-binding residues include Lys41, Leu73, and Lys87. Residues 88-90 (GLR), Glu98, and 123-129 (YGYLSSS) each bind ATP.

The protein belongs to the bacterial CoaD family. As to quaternary structure, homohexamer. It depends on Mg(2+) as a cofactor.

The protein localises to the cytoplasm. It carries out the reaction (R)-4'-phosphopantetheine + ATP + H(+) = 3'-dephospho-CoA + diphosphate. It participates in cofactor biosynthesis; coenzyme A biosynthesis; CoA from (R)-pantothenate: step 4/5. Reversibly transfers an adenylyl group from ATP to 4'-phosphopantetheine, yielding dephospho-CoA (dPCoA) and pyrophosphate. This is Phosphopantetheine adenylyltransferase from Thermoanaerobacter pseudethanolicus (strain ATCC 33223 / 39E) (Clostridium thermohydrosulfuricum).